Reading from the N-terminus, the 135-residue chain is MVLESISKIIKIQLPAYLKKLPLPETIGGFARLTVSEWLRLLPLLGILALLGYLTIRPFLPKKKKQRDSLINLKIQKENPKVVNEIDIEDLRTPNVCYCRCWRSKTFPVCDKSHIKHNELTGDNVGPLILKKKTL.

Topologically, residues 1–37 are lumenal; it reads MVLESISKIIKIQLPAYLKKLPLPETIGGFARLTVSE. Residues 38 to 60 form a helical membrane-spanning segment; the sequence is WLRLLPLLGILALLGYLTIRPFL. Topologically, residues 61–135 are cytoplasmic; that stretch reads PKKKKQRDSL…GPLILKKKTL (75 aa). Residues cysteine 99, cysteine 101, cysteine 110, and histidine 114 each contribute to the [2Fe-2S] cluster site.

The protein belongs to the CISD protein family. CISD2 subfamily. Homodimer. The cofactor is [2Fe-2S] cluster.

It is found in the endoplasmic reticulum membrane. It localises to the mitochondrion outer membrane. Its function is as follows. Regulator of autophagy that contributes to antagonize becn1-mediated cellular autophagy at the endoplasmic reticulum. Participates in the interaction of bcl2 with becn1 and is required for bcl2-mediated depression of endoplasmic reticulum Ca(2+) stores during autophagy. This chain is CDGSH iron-sulfur domain-containing protein 2 (cisd2), found in Danio rerio (Zebrafish).